The sequence spans 514 residues: Peptide chain release factor 3 (514 aa).

Residues 8 to 268 enclose the tr-type G domain; that stretch reads KKRRTFAIIS…TFLEFAPEPH (261 aa). Residues 17 to 24, 85 to 89, and 139 to 142 contribute to the GTP site; these read SHPDAGKT, DTPGH, and NKLD.

Belongs to the TRAFAC class translation factor GTPase superfamily. Classic translation factor GTPase family. PrfC subfamily.

The protein resides in the cytoplasm. Its function is as follows. Increases the formation of ribosomal termination complexes and stimulates activities of RF-1 and RF-2. It binds guanine nucleotides and has strong preference for UGA stop codons. It may interact directly with the ribosome. The stimulation of RF-1 and RF-2 is significantly reduced by GTP and GDP, but not by GMP. This Streptococcus pyogenes serotype M49 (strain NZ131) protein is Peptide chain release factor 3.